The primary structure comprises 604 residues: Elongation factor 4 (604 aa).

Residues 7-189 (SRIRNFSIIA…SIVHLVPPPD (183 aa)) form the tr-type G domain. Residues 19 to 24 (DHGKST) and 136 to 139 (NKID) each bind GTP.

This sequence belongs to the TRAFAC class translation factor GTPase superfamily. Classic translation factor GTPase family. LepA subfamily.

The protein localises to the cell inner membrane. It carries out the reaction GTP + H2O = GDP + phosphate + H(+). Functionally, required for accurate and efficient protein synthesis under certain stress conditions. May act as a fidelity factor of the translation reaction, by catalyzing a one-codon backward translocation of tRNAs on improperly translocated ribosomes. Back-translocation proceeds from a post-translocation (POST) complex to a pre-translocation (PRE) complex, thus giving elongation factor G a second chance to translocate the tRNAs correctly. Binds to ribosomes in a GTP-dependent manner. This Gloeothece citriformis (strain PCC 7424) (Cyanothece sp. (strain PCC 7424)) protein is Elongation factor 4.